We begin with the raw amino-acid sequence, 826 residues long: Eukaryotic translation initiation factor 3 subunit C (826 aa).

Disordered stretches follow at residues 1 to 71 (MSRF…GKGA) and 205 to 227 (SGGDVAEEEEEENKEDKPKPRAK). Over residues 10–20 (DSDDSSSDEDL) the composition is skewed to acidic residues. Positions 21–30 (YGSGSESGSD) are enriched in low complexity. Residues 32 to 65 (SQDEQDGGDDNDDDMSDDSMFADDSDDDSDDDED) are compositionally biased toward acidic residues. Residues 218–227 (KEDKPKPRAK) show a composition bias toward basic and acidic residues. The region spanning 605–779 (FHTHINLELL…NSVVFTQAVQ (175 aa)) is the PCI domain.

It belongs to the eIF-3 subunit C family. Component of the eukaryotic translation initiation factor 3 (eIF-3) complex.

Its subcellular location is the cytoplasm. Component of the eukaryotic translation initiation factor 3 (eIF-3) complex, which is involved in protein synthesis of a specialized repertoire of mRNAs and, together with other initiation factors, stimulates binding of mRNA and methionyl-tRNAi to the 40S ribosome. The eIF-3 complex specifically targets and initiates translation of a subset of mRNAs involved in cell proliferation. This chain is Eukaryotic translation initiation factor 3 subunit C, found in Yarrowia lipolytica (strain CLIB 122 / E 150) (Yeast).